Here is a 242-residue protein sequence, read N- to C-terminus: Small ribosomal subunit protein uS2 (242 aa).

It belongs to the universal ribosomal protein uS2 family.

This Photobacterium profundum (strain SS9) protein is Small ribosomal subunit protein uS2.